Reading from the N-terminus, the 241-residue chain is Adapter protein MecA (241 aa).

The disordered stretch occupies residues 77 to 102 (KNTDEDDVADESQGDASVDSEHPDQV). Positions 80–89 (DEDDVADESQ) are enriched in acidic residues.

It belongs to the MecA family. Homodimer.

Functionally, enables the recognition and targeting of unfolded and aggregated proteins to the ClpC protease or to other proteins involved in proteolysis. The chain is Adapter protein MecA from Levilactobacillus brevis (strain ATCC 367 / BCRC 12310 / CIP 105137 / JCM 1170 / LMG 11437 / NCIMB 947 / NCTC 947) (Lactobacillus brevis).